A 379-amino-acid polypeptide reads, in one-letter code: Alanine racemase (379 aa).

Residue Lys-41 is the Proton acceptor; specific for D-alanine of the active site. Lys-41 bears the N6-(pyridoxal phosphate)lysine mark. Arg-138 contacts substrate. Tyr-260 (proton acceptor; specific for L-alanine) is an active-site residue. Residue Met-319 participates in substrate binding.

It belongs to the alanine racemase family. It depends on pyridoxal 5'-phosphate as a cofactor.

The enzyme catalyses L-alanine = D-alanine. It functions in the pathway amino-acid biosynthesis; D-alanine biosynthesis; D-alanine from L-alanine: step 1/1. Catalyzes the interconversion of L-alanine and D-alanine. May also act on other amino acids. The protein is Alanine racemase (alr) of Rhizobium meliloti (strain 1021) (Ensifer meliloti).